A 263-amino-acid polypeptide reads, in one-letter code: Interleukin-15 receptor subunit alpha (263 aa).

The N-terminal stretch at 1 to 32 (MASPQLRGYGVQAIPVLLLLLLLLLLPLRVTP) is a signal peptide. At 33 to 205 (GTTCPPPVSI…ISPHSSKMTK (173 aa)) the chain is on the extracellular side. One can recognise a Sushi domain in the interval 34–98 (TTCPPPVSIE…WTTPSLKCIR (65 aa)). 2 cysteine pairs are disulfide-bonded: Cys36–Cys78 and Cys62–Cys96. N-linked (GlcNAc...) asparagine glycosylation occurs at Asn51. Over residues 113–135 (TPKVTSQPESPSPSAKEPEAFSP) the composition is skewed to low complexity. Positions 113–178 (TPKVTSQPES…HKSSRAPSLA (66 aa)) are disordered. Over residues 136 to 145 (KSDTAMTTET) the composition is skewed to polar residues. Positions 154-169 (TPSQTTSAGTTGTGSH) are enriched in low complexity. Residues 206-226 (VAISTSVLLVGAGVVMAFLAW) traverse the membrane as a helical segment. At 227-263 (YIKSRQPSQPCRVEVETMETVPMTVRASSKEDEDTGA) the chain is on the cytoplasmic side.

The interleukin-15 receptor IL15R is a heterotrimer of IL15RA, IL2RB and IL2RG. IL15RA also self-associates. Interacts with SYK. In terms of processing, N-glycosylated and O-glycosylated. Post-translationally, a soluble form (sIL-15RA) arises from proteolytic shedding of the membrane-anchored receptor. It also binds IL15 and thus interferes with IL15 binding to the membrane receptor. As to expression, widely expressed.

It is found in the membrane. The protein resides in the nucleus membrane. Its subcellular location is the cell surface. The protein localises to the secreted. It localises to the extracellular space. Its function is as follows. High-affinity receptor for interleukin-15. Can signal both in cis and trans where IL15R from one subset of cells presents IL15 to neighboring IL2RG-expressing cells. In neutrophils, binds and activates kinase SYK in response to IL15 stimulation. In neutrophils, required for IL15-induced phagocytosis in a SYK-dependent manner. The sequence is that of Interleukin-15 receptor subunit alpha (Il15ra) from Mus musculus (Mouse).